The sequence spans 674 residues: Zinc finger protein 750 (674 aa).

The CCHC-type zinc finger occupies 25–51; the sequence is YKCFQCPFTCNEKSHLFNHMKYGLCKN. Positions 27, 30, 43, and 49 each coordinate Zn(2+). Disordered stretches follow at residues 105-125, 370-466, and 594-674; these read EAKE…KTTV, LAKN…QSHS, and TSSP…PRVS. Composition is skewed to polar residues over residues 401–411 and 444–466; these read SPTNFTQSSQG and DSQT…QSHS.

It localises to the nucleus. In terms of biological role, transcription factor involved in epidermis differentiation. The sequence is that of Zinc finger protein 750 (znf750) from Xenopus laevis (African clawed frog).